Consider the following 274-residue polypeptide: Imidazole glycerol phosphate synthase subunit HisF (274 aa).

Active-site residues include Asp-11 and Asp-134.

It belongs to the HisA/HisF family. Heterodimer of HisH and HisF.

It localises to the cytoplasm. It catalyses the reaction 5-[(5-phospho-1-deoxy-D-ribulos-1-ylimino)methylamino]-1-(5-phospho-beta-D-ribosyl)imidazole-4-carboxamide + L-glutamine = D-erythro-1-(imidazol-4-yl)glycerol 3-phosphate + 5-amino-1-(5-phospho-beta-D-ribosyl)imidazole-4-carboxamide + L-glutamate + H(+). It functions in the pathway amino-acid biosynthesis; L-histidine biosynthesis; L-histidine from 5-phospho-alpha-D-ribose 1-diphosphate: step 5/9. Its function is as follows. IGPS catalyzes the conversion of PRFAR and glutamine to IGP, AICAR and glutamate. The HisF subunit catalyzes the cyclization activity that produces IGP and AICAR from PRFAR using the ammonia provided by the HisH subunit. This chain is Imidazole glycerol phosphate synthase subunit HisF, found in Methanosphaera stadtmanae (strain ATCC 43021 / DSM 3091 / JCM 11832 / MCB-3).